The primary structure comprises 538 residues: Low affinity inorganic phosphate transporter 3 (538 aa).

Residues M1–A24 are Cytoplasmic-facing. Residues I25–V45 traverse the membrane as a helical segment. Topologically, residues T46 to S70 are extracellular. A helical membrane pass occupies residues A71–L91. Topologically, residues G92–K99 are cytoplasmic. The helical transmembrane segment at V100–G120 threads the bilayer. Topologically, residues K121 to T122 are extracellular. Residues A123 to G143 traverse the membrane as a helical segment. Over D144–F164 the chain is Cytoplasmic. The chain crosses the membrane as a helical span at residues I165 to I185. At V186–A211 the chain is on the extracellular side. A helical membrane pass occupies residues D212–W232. The Cytoplasmic portion of the chain corresponds to R233–R292. A helical membrane pass occupies residues H293–S313. Residues Q314–R345 lie on the Extracellular side of the membrane. Residues A346–I366 form a helical membrane-spanning segment. Topologically, residues D367 to R371 are cytoplasmic. The chain crosses the membrane as a helical span at residues F372–P392. Residues Y393–R402 lie on the Extracellular side of the membrane. The chain crosses the membrane as a helical span at residues I403–T423. Topologically, residues T424–G442 are cytoplasmic. Residues I443 to A463 traverse the membrane as a helical segment. At Q464–N483 the chain is on the extracellular side. The helical transmembrane segment at A484–E504 threads the bilayer. The Cytoplasmic segment spans residues S505 to V538. Over residues K506–N517 the composition is skewed to basic and acidic residues. A disordered region spans residues K506–V538.

It belongs to the major facilitator superfamily. Phosphate:H(+) symporter (TC 2.A.1.9) family. As to expression, expressed at low levels in non-mycorrhized roots.

Its subcellular location is the cell membrane. It catalyses the reaction phosphate(in) + H(+)(in) = phosphate(out) + H(+)(out). In terms of biological role, low-affinity transporter for external inorganic phosphate (Pi) probably involved in the acquisition of phosphate released by arbuscular mycorrhizal (AM) fungi during AM symbiosis. This is Low affinity inorganic phosphate transporter 3 from Petunia hybrida (Petunia).